Reading from the N-terminus, the 192-residue chain is dTTP/UTP pyrophosphatase (192 aa).

Asp-72 functions as the Proton acceptor in the catalytic mechanism.

This sequence belongs to the Maf family. YhdE subfamily. A divalent metal cation serves as cofactor.

The protein localises to the cytoplasm. The enzyme catalyses dTTP + H2O = dTMP + diphosphate + H(+). It catalyses the reaction UTP + H2O = UMP + diphosphate + H(+). Its function is as follows. Nucleoside triphosphate pyrophosphatase that hydrolyzes dTTP and UTP. May have a dual role in cell division arrest and in preventing the incorporation of modified nucleotides into cellular nucleic acids. In Hydrogenovibrio crunogenus (strain DSM 25203 / XCL-2) (Thiomicrospira crunogena), this protein is dTTP/UTP pyrophosphatase.